The chain runs to 693 residues: Polyribonucleotide nucleotidyltransferase (693 aa).

Mg(2+) is bound by residues Asp485 and Asp491. Residues 552-611 (PRIETMQINTSKIATVIGPGGKQIRQIIERSGAQVDINDNGLINISANTQESIDKAKELI) form the KH domain. The 69-residue stretch at 621 to 689 (GKIYNGRVTS…EKGQLKLSHK (69 aa)) folds into the S1 motif domain.

This sequence belongs to the polyribonucleotide nucleotidyltransferase family. Mg(2+) serves as cofactor.

The protein resides in the cytoplasm. The enzyme catalyses RNA(n+1) + phosphate = RNA(n) + a ribonucleoside 5'-diphosphate. Involved in mRNA degradation. Catalyzes the phosphorolysis of single-stranded polyribonucleotides processively in the 3'- to 5'-direction. The polypeptide is Polyribonucleotide nucleotidyltransferase (Chlamydia muridarum (strain MoPn / Nigg)).